The chain runs to 443 residues: Probable lysophospholipase BODYGUARD 5 (443 aa).

An N-terminal signal peptide occupies residues 1 to 52 (MITSSFSEKCTSVINGAPSWAVFFLFDLLDYFLCIVFRFLDEVMEEKSESCH). A lipid anchor (N-palmitoyl cysteine) is attached at Cys-53. The AB hydrolase-1 domain maps to 163-268 (VIFVHGFLAS…VKSVALVAPP (106 aa)). His-167 is a catalytic residue. Ser-242 acts as the Nucleophile in catalysis. Active-site charge relay system residues include Asp-387 and His-415.

It localises to the cell membrane. The protein localises to the secreted. The protein resides in the cell wall. Functionally, involved in cuticle development and morphogenesis. This chain is Probable lysophospholipase BODYGUARD 5, found in Arabidopsis thaliana (Mouse-ear cress).